The primary structure comprises 36 residues: uncharacterized protein (36 aa).

This is an uncharacterized protein from Archaeoglobus fulgidus (strain ATCC 49558 / DSM 4304 / JCM 9628 / NBRC 100126 / VC-16).